A 318-amino-acid polypeptide reads, in one-letter code: Probable pyridoxal 5'-phosphate synthase subunit PDX1.1 (318 aa).

Aspartate 49 lines the D-ribose 5-phosphate pocket. Lysine 106 functions as the Schiff-base intermediate with D-ribose 5-phosphate in the catalytic mechanism. Glycine 178 is a binding site for D-ribose 5-phosphate. Arginine 190 serves as a coordination point for D-glyceraldehyde 3-phosphate. D-ribose 5-phosphate contacts are provided by residues glycine 239 and glycine 260–serine 261.

This sequence belongs to the PdxS/SNZ family.

The catalysed reaction is aldehydo-D-ribose 5-phosphate + D-glyceraldehyde 3-phosphate + L-glutamine = pyridoxal 5'-phosphate + L-glutamate + phosphate + 3 H2O + H(+). The protein operates within cofactor biosynthesis; pyridoxal 5'-phosphate biosynthesis. Catalyzes the formation of pyridoxal 5'-phosphate from ribose 5-phosphate (RBP), glyceraldehyde 3-phosphate (G3P) and ammonia. The ammonia is provided by PDX2. Can also use ribulose 5-phosphate and dihydroxyacetone phosphate as substrates, resulting from enzyme-catalyzed isomerization of RBP and G3P, respectively. Also plays an indirect role in resistance to singlet oxygen-generating photosensitizers. The protein is Probable pyridoxal 5'-phosphate synthase subunit PDX1.1 (PDX11) of Oryza sativa subsp. japonica (Rice).